Reading from the N-terminus, the 342-residue chain is MTYSIAILGASGYTGAELIRLIAGHSALKITALGAFSKAGQSVAQVFPHLRHLDLPALLQIDQIDFANIDLCFCALPHKTSQEVIAALPSDLKVVDLSADFRLRDPDAYEKWYGNKHAALKQQAEAVYGLTEFYRDDIKTARLVAGTGCNAATGQYMLRPLITAGVIDLDDIILDLKCAVSGAGRSLKENLLHAELSEGYHAYATGSTHRHLGEFDQEFSKLAGRPVQIQFTPHLIPANRGILGTGYLRGEAAQIHDTLSQAYANEPFIDVLPFGETPSTRHVRGSNFCHIGVVADRQPGRALVVAALDNLTKGSSGQALQNANLMLNIKETEGLMMPPLFP.

Residue Cys149 is part of the active site.

This sequence belongs to the NAGSA dehydrogenase family. Type 1 subfamily.

It localises to the cytoplasm. The catalysed reaction is N-acetyl-L-glutamate 5-semialdehyde + phosphate + NADP(+) = N-acetyl-L-glutamyl 5-phosphate + NADPH + H(+). It functions in the pathway amino-acid biosynthesis; L-arginine biosynthesis; N(2)-acetyl-L-ornithine from L-glutamate: step 3/4. Functionally, catalyzes the NADPH-dependent reduction of N-acetyl-5-glutamyl phosphate to yield N-acetyl-L-glutamate 5-semialdehyde. The sequence is that of N-acetyl-gamma-glutamyl-phosphate reductase from Roseobacter denitrificans (strain ATCC 33942 / OCh 114) (Erythrobacter sp. (strain OCh 114)).